The following is a 290-amino-acid chain: Coiled-coil domain-containing protein 137 (290 aa).

Disordered stretches follow at residues 1-92 (MARP…EAQV), 98-117 (LEKE…FKQR), 139-181 (LSKN…EARA), and 269-290 (RQEM…HACL). Low complexity predominate over residues 20-39 (SGQPQGRRQQQAQGQQRSAS). Over residues 56 to 79 (KNQDEQEIPFRLREIMRSRQEMKK) the composition is skewed to basic and acidic residues. The stretch at 66 to 89 (RLREIMRSRQEMKKTLSNKKRKKE) forms a coiled coil. Residues 154-163 (PKKEKSERKK) are compositionally biased toward basic and acidic residues. The stretch at 155–192 (KKEKSERKKAFQKRRLEKAQRKREARAVDRLEQELLKD) forms a coiled coil. A compositionally biased stretch (basic residues) spans 164–178 (AFQKRRLEKAQRKRE).

It is found in the chromosome. The polypeptide is Coiled-coil domain-containing protein 137 (Ccdc137) (Mus musculus (Mouse)).